A 378-amino-acid polypeptide reads, in one-letter code: C-C chemokine receptor type 7 (378 aa).

Residues 1-24 (MDLGKPMKSVLVVALLVIFQVCLC) form the signal peptide. Topologically, residues 25–59 (QDEVTDDYIGDNTTVDYTLFESLCSKKDVRNFKAW) are extracellular. Asparagine 36 carries N-linked (GlcNAc...) asparagine glycosylation. A helical membrane pass occupies residues 60–86 (FLPIMYSIICFVGLLGNGLVVLTYIYF). Topologically, residues 87-95 (KRLKTMTDT) are cytoplasmic. Residues 96–116 (YLLNLAVADILFLLTLPFWAY) traverse the membrane as a helical segment. Residues 117–130 (SAAKSWVFGVHFCK) lie on the Extracellular side of the membrane. Cysteine 129 and cysteine 210 are joined by a disulfide. A helical membrane pass occupies residues 131 to 152 (LIFAIYKMSFFSGMLLLLCISI). At 153–170 (DRYVAIVQAVSAHRHRAR) the chain is on the cytoplasmic side. A helical transmembrane segment spans residues 171-191 (VLLISKLSCVGIWILATVLSI). Residues 192–219 (PELLYSDLQRSSSEQAMRCSLITEHVEA) lie on the Extracellular side of the membrane. The helical transmembrane segment at 220–247 (FITIQVAQMVIGFLVPLLAMSFCYLVII) threads the bilayer. Topologically, residues 248–263 (RTLLQARNFERNKAIK) are cytoplasmic. A helical membrane pass occupies residues 264–289 (VIIAVVVVFIVFQLPYNGVVLAQTVA). Residues 290–313 (NFNITSSTCELSKQLNIAYDVTYS) lie on the Extracellular side of the membrane. The chain crosses the membrane as a helical span at residues 314 to 331 (LACVRCCVNPFLYAFIGV). Residues 332 to 378 (KFRNDLFKLFKDLGCLSQEQLRQWSSCRHIRRSSMSVEAETTTTFSP) lie on the Cytoplasmic side of the membrane.

It belongs to the G-protein coupled receptor 1 family. As to expression, expressed in various lymphoid tissues and activated B- and T-lymphocytes, strongly up-regulated in B-cells infected with Epstein-Barr virus and T-cells infected with herpesvirus 6 or 7.

The protein resides in the cell membrane. Functionally, receptor for the MIP-3-beta chemokine. Probable mediator of EBV effects on B-lymphocytes or of normal lymphocyte functions. In Homo sapiens (Human), this protein is C-C chemokine receptor type 7 (CCR7).